A 237-amino-acid polypeptide reads, in one-letter code: Tyrosine-protein kinase YwqD (237 aa).

Position 228 is a phosphotyrosine; by autocatalysis (Tyr-228).

Belongs to the CpsD/CapB family. Autophosphorylated in vitro, which inhibits ATPase activity. Dephosphorylated by YwqE in vitro.

It carries out the reaction L-tyrosyl-[protein] + ATP = O-phospho-L-tyrosyl-[protein] + ADP + H(+). May be involved in the regulation of capsular polysaccharide biosynthesis. Autophosphorylates in vitro. Phosphorylates and activates in vitro two UDP-glucose dehydrogenases, YwqF and TuaD, as well as the DNA-binding proteins Ssb and SsbB. This is Tyrosine-protein kinase YwqD (ywqD) from Bacillus subtilis (strain 168).